The primary structure comprises 409 residues: Serine/threonine transporter SstT (409 aa).

Transmembrane regions (helical) follow at residues Leu15 to Ala35, Phe49 to Ile69, Pro82 to Ser102, Ala142 to Ile162, Leu193 to Gly213, Leu218 to Phe238, Gly301 to Val321, Val331 to Ile351, and Leu357 to Val377.

This sequence belongs to the dicarboxylate/amino acid:cation symporter (DAACS) (TC 2.A.23) family.

The protein localises to the cell inner membrane. The enzyme catalyses L-serine(in) + Na(+)(in) = L-serine(out) + Na(+)(out). It catalyses the reaction L-threonine(in) + Na(+)(in) = L-threonine(out) + Na(+)(out). Functionally, involved in the import of serine and threonine into the cell, with the concomitant import of sodium (symport system). The sequence is that of Serine/threonine transporter SstT from Pseudomonas fluorescens (strain ATCC BAA-477 / NRRL B-23932 / Pf-5).